A 59-amino-acid polypeptide reads, in one-letter code: MVSTLMIASVKLRLYCTALIILCNQKNPSEFNVLIHKLIIKWGFMNKNFHFVSVFFIKF.

The first 18 residues, 1–18, serve as a signal peptide directing secretion; it reads MVSTLMIASVKLRLYCTA.

This sequence belongs to the non-disulfide-bridged peptide (NDBP) superfamily. Long chain multifunctional peptide (group 2) family. In terms of tissue distribution, expressed by the venom gland.

It localises to the secreted. In Lychas mucronatus (Chinese swimming scorpion), this protein is Venom protein 37.1.